The primary structure comprises 215 residues: Somatotropin (215 aa).

The signal sequence occupies residues 1 to 25 (MAPGMRVCLLLLIAFTLLGPQRAAA). Histidine 44 serves as a coordination point for Zn(2+). Serine 130 bears the Phosphoserine mark. Glutamate 197 contacts Zn(2+).

Belongs to the somatotropin/prolactin family.

It is found in the secreted. Its function is as follows. Plays an important role in growth control. Its major role in stimulating body growth is to stimulate the liver and other tissues to secrete IGF1. It stimulates both the differentiation and proliferation of myoblasts. It also stimulates amino acid uptake and protein synthesis in muscle and other tissues. The protein is Somatotropin (GH1) of Monodelphis domestica (Gray short-tailed opossum).